The sequence spans 424 residues: Myb family transcription factor RLI1 (424 aa).

A disordered region spans residues 144–165 (RPQKRDSGERTPLPPPSQQQHQ). The 61-residue stretch at 238–298 (APSKTRIRWT…HLQKYRIAKY (61 aa)) folds into the HTH myb-type domain. Positions 269-294 (PKGILKLMNSDGLTIYHIKSHLQKYR) form a DNA-binding region, H-T-H motif. The LHEQLE signature appears at 342–347 (LHEQLE). Residues 342-391 (LHEQLEIQRNLQLRIEEQGKRLQKMFEDQLKASRSVMEPQELDDVVAFAA) adopt a coiled-coil conformation.

Belongs to the MYB-CC family. Homodimer. Interacts with PHR2 in the nucleus. Interacts with SPX1 and SPX2 in the nucleus; these interactions prevent binding to the promoters of target genes, thus regulating negatively leaf inclination in response to phosphate (Pi) starvation.

The protein localises to the nucleus. In terms of biological role, transcription factor binding to specific DNA sequences of target genes promoters, such as the motif R1BS 5'-NAKATNCN-3' and the motif P1BS 5'-GNATATNC-3' to trigger their expression. Nitrate-induced component involved in modulating phosphate (Pi) response and homeostasis together with PHR2; activates directly the expression of Pi starvation-induced (PSI) genes upon nitrate disponibility, thus triggering the nitrate-induced phosphate response (NIPR) promoting Pi uptake activity. Involved in the shoot architecture; positively regulates leaf inclination by affecting lamina joint cell elongation via the direct promotion of ILI4/BU1 and BC1 genes expression, especially in response to phosphate (Pi) availability. Regulates both brassinolide (BL) biosynthesis and signaling by directly activating BL-biosynthesis and signaling genes. The chain is Myb family transcription factor RLI1 from Oryza sativa subsp. indica (Rice).